The following is a 435-amino-acid chain: Elongation factor 1-alpha (435 aa).

Residues 6–231 (KVHINLVVIG…DALEPPKRPV (226 aa)) form the tr-type G domain. Residues 15–22 (GHVDSGKS) form a G1 region. Residue 15-22 (GHVDSGKS) participates in GTP binding. A G2 region spans residues 71–75 (GITID). A G3 region spans residues 92–95 (DAPG). GTP-binding positions include 92–96 (DAPGH) and 154–157 (NKMD). The G4 stretch occupies residues 154-157 (NKMD). Residues 195–197 (SGF) form a G5 region.

The protein belongs to the TRAFAC class translation factor GTPase superfamily. Classic translation factor GTPase family. EF-Tu/EF-1A subfamily.

The protein resides in the cytoplasm. This protein promotes the GTP-dependent binding of aminoacyl-tRNA to the A-site of ribosomes during protein biosynthesis. The polypeptide is Elongation factor 1-alpha (Tetrahymena pyriformis).